The following is a 436-amino-acid chain: Chaperone protein dnaJ 16 (436 aa).

Positions 20–85 constitute a J domain; the sequence is DPYEVLGVLR…EKRRQFDSAG (66 aa). Positions 291 to 348 form a coiled coil; the sequence is TQEKEDLRSVEAQILTKRAELAKFETEYREVLVQFTDMTSRYAQEMQSIDELLKQRNE. The disordered stretch occupies residues 360 to 416; it reads KRSSSKNRMRKSSFKKAAAKAPAPTEQEEEEEEEEEEEEESSRQKNKKPSTCDKSET. Residues 362–377 are compositionally biased toward basic residues; it reads SSSKNRMRKSSFKKAA. A compositionally biased stretch (acidic residues) spans 385–399; the sequence is EQEEEEEEEEEEEEE.

The protein belongs to the DnaJ family. B/II subfamily. In terms of tissue distribution, expressed constitutively in seedlings, roots, leaves, stems, flowers and siliques.

It localises to the membrane. Plays a continuous role in plant development probably in the structural organization of compartments. Seems to not be involved in gravitropism signaling pathway. This is Chaperone protein dnaJ 16 (ATJ16) from Arabidopsis thaliana (Mouse-ear cress).